The following is a 391-amino-acid chain: Paired box protein Pax-5 (391 aa).

A DNA-binding region (paired) is located at residues 16-142 (GHGGVNQLGG…SSINRIIRTK (127 aa)). Positions 19-75 (GVNQLGGVFVNGRPLPDVVRQRIVELAHQGVRPCDISRQLRVSHGCVSKILGRYYET) are PAI subdomain. Positions 94 to 142 (KVVEKIAEYKRQNPTMFAWEIRDRLLAERVCDNDTVPSVSSINRIIRTK) are RED subdomain. Residues 182–218 (SGILGITSPSADTNKRKRDEGIQESPVPNGHSLPGRD) form a disordered region.

In terms of assembly, interacts with ETS1; this interaction alters PAX5 DNA-binding properties. Binds DNA as a monomer. Interacts with TBP; this interaction allows PAX5 to interact with the basal transcription machinery. Interacts with RB1. Interacts with TLE4. Interacts with DAXX. In terms of processing, O-glycosylated. Phosphorylated by SYK. This phosphorylation plays an important role in the abolition of BLIMP1 repression by PAX5 in order to trigger plasma cell differentiation. Expressed in all B-lymphoid organs, in the embryonic midbrain and in adult testis.

Its subcellular location is the nucleus. Transcription factor that plays an essential role in commitment of lymphoid progenitors to the B-lymphocyte lineage. Fulfills a dual role by repressing B-lineage inappropriate genes and simultaneously activating B-lineage-specific genes. In turn, regulates cell adhesion and migration, induces V(H)-to-D(H)J(H) recombination, facilitates pre-B-cell receptor signaling and promotes development to the mature B-cell stage. Repression of the cohesin-release factor WAPL causes global changes of the chromosomal architecture in pro-B cells to facilitate the generation of a diverse antibody repertoire. This Mus musculus (Mouse) protein is Paired box protein Pax-5 (Pax5).